We begin with the raw amino-acid sequence, 72 residues long: Holocyclotoxin-1 (72 aa).

Residues 1–22 (MSKVTTVFIGALVLLLLIENGF) form the signal peptide. Intrachain disulfides connect Cys-24–Cys-40, Cys-32–Cys-57, Cys-36–Cys-60, and Cys-42–Cys-70.

Expressed in salivary glands.

It localises to the secreted. Its function is as follows. Probable neurotoxin. The protein is Holocyclotoxin-1 of Ixodes holocyclus (Australian paralysis tick).